The following is a 109-amino-acid chain: Cell division suppressor protein YneA (109 aa).

Residues 40 to 94 form the LysM domain; it reads STVTITKGDTLWELSNKYHNHHHLTTNEFVKWVEDVNDLNSDTAQSLSPGDKLYI.

The protein belongs to the YneA family.

The protein resides in the cytoplasm. In terms of biological role, inhibits cell division during the SOS response. Affects a later stage of the cell division protein assembly, after the assembly of the Z ring, by probably suppressing recruitment of FtsL and/or DivIC to the division machinery. This Priestia megaterium (strain DSM 319 / IMG 1521) (Bacillus megaterium) protein is Cell division suppressor protein YneA.